Consider the following 774-residue polypeptide: Neprilysin-2 (774 aa).

The Cytoplasmic portion of the chain corresponds to Met-1 to Ser-20. Residues Leu-21–Gly-41 form a helical; Signal-anchor for type II membrane protein membrane-spanning segment. The Extracellular portion of the chain corresponds to Lys-42 to Trp-774. The disordered stretch occupies residues Ser-50–Asp-79. The span at Asp-60–Lys-74 shows a compositional bias: polar residues. The region spanning Val-83–Trp-774 is the Peptidase M13 domain. 5 disulfide bridges follow: Cys-84/Cys-89, Cys-107/Cys-759, Cys-115/Cys-719, Cys-171/Cys-424, and Cys-646/Cys-771. N-linked (GlcNAc...) asparagine glycans are attached at residues Asn-173, Asn-239, Asn-264, Asn-305, Asn-315, Asn-358, and Asn-554. Residue His-609 participates in Zn(2+) binding. Residue Glu-610 is part of the active site. His-613 serves as a coordination point for Zn(2+). The N-linked (GlcNAc...) asparagine glycan is linked to Asn-653. Residue Glu-671 coordinates Zn(2+). The Proton donor role is filled by Asp-675.

Belongs to the peptidase M13 family. Zn(2+) is required as a cofactor. In terms of processing, N-glycosylated. The soluble form is probably produced by proteolytic cleavage. In terms of tissue distribution, detected in the stellate cells in the main segment and the bar-shaped cells in the initial segment of male and female Malpighian tubules (at protein level). Expressed in the spermatheca (at protein level). Expressed in the somatic cyst cells of the testes, with increased expression at the tail end of elongating cysts. Expressed in the ovaries with strong expression in the posterior polar cells and in border cells of stage 8, 9, and 10 follicles. In adults and third-instar larvae, expressed in the brain, ventral ganglion, and stellate cells. Also expressed in the foregut and the imaginal disks (eye, antennal and leg) of third-instar larvae. In stage 17 embryos, expressed in the tracheal system, foregut, hindgut and epidermis. Also expressed in the stellate cell progenitors of the caudal visceral mesoderm in embryos.

The protein localises to the cell membrane. It localises to the secreted. The enzyme catalyses Preferential cleavage of polypeptides between hydrophobic residues, particularly with Phe or Tyr at P1'.. Metalloendoprotease which cleaves peptides such as tachykinin peptide TK-2 at the amino side of hydrophobic residues. Functions in female fertility, embryogenesis and memory formation. Required in females for normal patterns of egg laying, probably due to its function in sperm retention and preventing sperm displacement by rival ejaculates. Also required for normal patterns of hatching due to its important role in early embryonic development. Required in the dorsal paired medial neurons for the proper formation of middle-term memory. Also required in the mushroom body neurons where it functions redundantly with neprilysins Nep3 and Nep4 in normal long-term memory formation. The polypeptide is Neprilysin-2 (Drosophila melanogaster (Fruit fly)).